Here is a 242-residue protein sequence, read N- to C-terminus: 1-(5-phosphoribosyl)-5-[(5-phosphoribosylamino)methylideneamino] imidazole-4-carboxamide isomerase (242 aa).

Asp8 serves as the catalytic Proton acceptor. Catalysis depends on Asp129, which acts as the Proton donor.

The protein belongs to the HisA/HisF family.

The protein localises to the cytoplasm. The enzyme catalyses 1-(5-phospho-beta-D-ribosyl)-5-[(5-phospho-beta-D-ribosylamino)methylideneamino]imidazole-4-carboxamide = 5-[(5-phospho-1-deoxy-D-ribulos-1-ylimino)methylamino]-1-(5-phospho-beta-D-ribosyl)imidazole-4-carboxamide. The protein operates within amino-acid biosynthesis; L-histidine biosynthesis; L-histidine from 5-phospho-alpha-D-ribose 1-diphosphate: step 4/9. The protein is 1-(5-phosphoribosyl)-5-[(5-phosphoribosylamino)methylideneamino] imidazole-4-carboxamide isomerase of Dictyoglomus turgidum (strain DSM 6724 / Z-1310).